Here is a 268-residue protein sequence, read N- to C-terminus: Zinc transporter ZupT (268 aa).

8 helical membrane passes run 5 to 25 (ILFA…GSII), 38 to 58 (TVSL…EIFV), 72 to 92 (AGYI…ALID), 124 to 144 (MGLF…LATF), 152 to 172 (TLGI…GLAV), 187 to 207 (FVLS…GFFL), 211 to 231 (LFTE…MVYI), and 248 to 268 (LAIG…LLFL). Fe(2+) contacts are provided by N136 and E139. Residues E139 and H164 each coordinate Zn(2+). Fe(2+) contacts are provided by N165, E168, and E197. Residue E168 participates in Zn(2+) binding.

Belongs to the ZIP transporter (TC 2.A.5) family. ZupT subfamily.

Its subcellular location is the cell inner membrane. It carries out the reaction Zn(2+)(in) = Zn(2+)(out). Mediates zinc uptake. May also transport other divalent cations. The polypeptide is Zinc transporter ZupT (Chlorobaculum parvum (strain DSM 263 / NCIMB 8327) (Chlorobium vibrioforme subsp. thiosulfatophilum)).